The chain runs to 563 residues: Methylcrotonoyl-CoA carboxylase beta chain, mitochondrial (563 aa).

A mitochondrion-targeting transit peptide spans 1–22 (MWGALRSVLRPCSRASVPRQRA). One can recognise a CoA carboxyltransferase N-terminal domain in the interval 49–306 (MKALVNQLHE…QKKLDVTVEP (258 aa)). Positions 49–555 (MKALVNQLHE…SAALNAPIQR (507 aa)) are carboxyltransferase. An N6-acetyllysine; alternate modification is found at Lys-70. At Lys-70 the chain carries N6-succinyllysine; alternate. Lys-141 carries the N6-succinyllysine modification. The CoA carboxyltransferase C-terminal domain occupies 309-555 (EPLFPADELY…SAALNAPIQR (247 aa)). The segment at 343 to 372 (RFNEFKALYGDTLVTGFARIFGYPVGIIGN) is acyl-CoA binding. Residue Lys-433 is modified to N6-succinyllysine. Lys-495 is modified (N6-acetyllysine; alternate). Lys-495 is modified (N6-succinyllysine; alternate). Lys-511 is modified (N6-acetyllysine).

This sequence belongs to the AccD/PCCB family. Probably a dodecamer composed of six biotin-containing alpha subunits (MCCC1) and six beta (MCCC2) subunits.

It is found in the mitochondrion matrix. It carries out the reaction 3-methylbut-2-enoyl-CoA + hydrogencarbonate + ATP = 3-methyl-(2E)-glutaconyl-CoA + ADP + phosphate + H(+). It functions in the pathway amino-acid degradation; L-leucine degradation; (S)-3-hydroxy-3-methylglutaryl-CoA from 3-isovaleryl-CoA: step 2/3. In terms of biological role, carboxyltransferase subunit of the 3-methylcrotonyl-CoA carboxylase, an enzyme that catalyzes the conversion of 3-methylcrotonyl-CoA to 3-methylglutaconyl-CoA, a critical step for leucine and isovaleric acid catabolism. The chain is Methylcrotonoyl-CoA carboxylase beta chain, mitochondrial (Mccc2) from Rattus norvegicus (Rat).